The chain runs to 842 residues: Elongation factor 2 (842 aa).

The region spanning 17–253 (TNVRNMSVIA…LWGDSYFNPK (237 aa)) is the tr-type G domain. Residues 26–33 (AHVDHGKS), 158–161 (NKVD), and 213–215 (SGL) contribute to the GTP site. His-699 is modified (diphthamide).

This sequence belongs to the TRAFAC class translation factor GTPase superfamily. Classic translation factor GTPase family. EF-G/EF-2 subfamily.

It is found in the cytoplasm. The catalysed reaction is GTP + H2O = GDP + phosphate + H(+). Its function is as follows. Catalyzes the GTP-dependent ribosomal translocation step during translation elongation. During this step, the ribosome changes from the pre-translocational (PRE) to the post-translocational (POST) state as the newly formed A-site-bound peptidyl-tRNA and P-site-bound deacylated tRNA move to the P and E sites, respectively. Catalyzes the coordinated movement of the two tRNA molecules, the mRNA and conformational changes in the ribosome. The polypeptide is Elongation factor 2 (EFT1) (Debaryomyces hansenii (strain ATCC 36239 / CBS 767 / BCRC 21394 / JCM 1990 / NBRC 0083 / IGC 2968) (Yeast)).